Reading from the N-terminus, the 227-residue chain is Ribonuclease 3 (227 aa).

Residues 4-133 (FETLEKLLGY…LIAAIYLDSN (130 aa)) form the RNase III domain. Mg(2+) is bound at residue Glu46. Residue Asp50 is part of the active site. Mg(2+)-binding residues include Asn119 and Glu122. Residue Glu122 is part of the active site. The DRBM domain occupies 158–226 (DPKTALQEWA…ARDLLHRLQD (69 aa)).

Belongs to the ribonuclease III family. In terms of assembly, homodimer. Requires Mg(2+) as cofactor.

The protein resides in the cytoplasm. The enzyme catalyses Endonucleolytic cleavage to 5'-phosphomonoester.. Its function is as follows. Digests double-stranded RNA. Involved in the processing of primary rRNA transcript to yield the immediate precursors to the large and small rRNAs (23S and 16S). Processes some mRNAs, and tRNAs when they are encoded in the rRNA operon. Processes pre-crRNA and tracrRNA of type II CRISPR loci if present in the organism. The sequence is that of Ribonuclease 3 from Rickettsia akari (strain Hartford).